Consider the following 279-residue polypeptide: Phospholipase A and acyltransferase 5 (279 aa).

Disordered stretches follow at residues 1-53 and 70-117; these read MGLS…GLNS and QLPA…ENEG. Positions 97–106 are enriched in polar residues; sequence LETTPSQKAD. The LRAT domain occupies 135–249; the sequence is LIEIFRIGYE…LRYGVPRSQQ (115 aa). Active-site residues include H145 and H157. C233 functions as the Acyl-thioester intermediate in the catalytic mechanism.

This sequence belongs to the H-rev107 family. Highest expression level in testis and pancreas.

It is found in the cytoplasm. Its subcellular location is the cytosol. The catalysed reaction is a 1,2-diacyl-sn-glycero-3-phosphocholine + H2O = a 1-acyl-sn-glycero-3-phosphocholine + a fatty acid + H(+). It carries out the reaction a 1,2-diacyl-sn-glycero-3-phosphocholine + H2O = a 2-acyl-sn-glycero-3-phosphocholine + a fatty acid + H(+). The enzyme catalyses 1-hexadecanoyl-2-(5Z,8Z,11Z,14Z-eicosatetraenoyl)-sn-glycero-3-phosphocholine + 1,2-di-(9Z-octadecenoyl)-sn-glycero-3-phosphoethanolamine = N-(5Z,8Z,11Z,14Z-eicosatetraenoyl)-1,2-di-(9Z-octadecenoyl)-sn-glycero-3-phosphoethanolamine + 1-hexadecanoyl-sn-glycero-3-phosphocholine + H(+). It catalyses the reaction 1,2-di-(9Z-octadecenoyl)-sn-glycero-3-phosphoethanolamine + 1,2-dihexadecanoyl-sn-glycero-3-phosphocholine = N-hexadecanoyl-1,2-di-(9Z-octadecenoyl)-sn-glycero-3-phosphoethanolamine + 1-hexadecanoyl-sn-glycero-3-phosphocholine + H(+). The catalysed reaction is 1,2-di-(9Z-octadecenoyl)-sn-glycero-3-phosphoethanolamine + 1,2-dihexadecanoyl-sn-glycero-3-phosphocholine = N-hexadecanoyl-1,2-di-(9Z-octadecenoyl)-sn-glycero-3-phosphoethanolamine + 2-hexadecanoyl-sn-glycero-3-phosphocholine + H(+). It carries out the reaction a 1,2-diacyl-sn-glycero-3-phosphoethanolamine + a 1,2-diacyl-sn-glycero-3-phosphocholine = an N-acyl-1,2-diacyl-sn-glycero-3-phosphoethanolamine + a 1-acyl-sn-glycero-3-phosphocholine + H(+). The enzyme catalyses a 1,2-diacyl-sn-glycero-3-phosphoethanolamine + a 1,2-diacyl-sn-glycero-3-phosphocholine = an N-acyl-1,2-diacyl-sn-glycero-3-phosphoethanolamine + a 2-acyl-sn-glycero-3-phosphocholine + H(+). It catalyses the reaction 1-hexadecanoyl-2-(9Z-octadecenoyl)-sn-glycero-3-phosphocholine + 1,2-di-(9Z-octadecenoyl)-sn-glycero-3-phosphoethanolamine = N,1,2-tri-(9Z-octadecenoyl)-sn-glycero-3-phosphoethanolamine + 1-hexadecanoyl-sn-glycero-3-phosphocholine + H(+). Exhibits both phospholipase A1/2 and acyltransferase activities. Shows phospholipase A1 (PLA1) and A2 (PLA2) activity, catalyzing the calcium-independent release of fatty acids from the sn-1 or sn-2 position of glycerophospholipids. Shows N-acyltransferase activity, catalyzing the calcium-independent transfer of a fatty acyl group at the sn-1 position of phosphatidylcholine (PC) and other glycerophospholipids to the primary amine of phosphatidylethanolamine (PE), forming N-acylphosphatidylethanolamine (NAPE), which serves as precursor for N-acylethanolamines (NAEs). The chain is Phospholipase A and acyltransferase 5 from Homo sapiens (Human).